A 61-amino-acid polypeptide reads, in one-letter code: Early E3 6.4 kDa protein (61 aa).

Positions 1 to 25 (MGNAGPLKLHTITKPGTIPYPPHGS) are disordered.

This is Early E3 6.4 kDa protein from Homo sapiens (Human).